A 285-amino-acid polypeptide reads, in one-letter code: Bifunctional protein FolD (285 aa).

NADP(+) contacts are provided by residues 165–167 (GAS) and serine 190.

This sequence belongs to the tetrahydrofolate dehydrogenase/cyclohydrolase family. In terms of assembly, homodimer.

The catalysed reaction is (6R)-5,10-methylene-5,6,7,8-tetrahydrofolate + NADP(+) = (6R)-5,10-methenyltetrahydrofolate + NADPH. The enzyme catalyses (6R)-5,10-methenyltetrahydrofolate + H2O = (6R)-10-formyltetrahydrofolate + H(+). It participates in one-carbon metabolism; tetrahydrofolate interconversion. In terms of biological role, catalyzes the oxidation of 5,10-methylenetetrahydrofolate to 5,10-methenyltetrahydrofolate and then the hydrolysis of 5,10-methenyltetrahydrofolate to 10-formyltetrahydrofolate. This Cupriavidus metallidurans (strain ATCC 43123 / DSM 2839 / NBRC 102507 / CH34) (Ralstonia metallidurans) protein is Bifunctional protein FolD.